The sequence spans 999 residues: Hypoxia up-regulated protein 1 (999 aa).

An N-terminal signal peptide occupies residues 1–32; it reads MAATVRRQRPRRLLCWALVAVLLADLLALSDT. 3 N-linked (GlcNAc...) asparagine glycosylation sites follow: Asn155, Asn222, and Asn515. The segment at 564–694 is disordered; the sequence is VEDSPEEEST…KKQKPARKQK (131 aa). Phosphoserine is present on Ser567. The span at 574–583 shows a compositional bias: polar residues; it reads LTKLGNTISS. N-linked (GlcNAc...) asparagine glycosylation occurs at Asn596. Basic and acidic residues-rich tracts occupy residues 611–626 and 641–668; these read GSKD…KEEA and PKGD…KPNE. Residues Asn830, Asn862, and Asn869 are each glycosylated (N-linked (GlcNAc...) asparagine). At Lys883 the chain carries N6-acetyllysine. The interval 909–999 is disordered; it reads AKFTKPRPRP…QKRPLKNDEL (91 aa). 2 N-linked (GlcNAc...) asparagine glycosylation sites follow: Asn922 and Asn931. The span at 949–962 shows a compositional bias: basic and acidic residues; the sequence is EEAKAILEPDKEGL. Residues 996–999 carry the Prevents secretion from ER motif; that stretch reads NDEL.

It belongs to the heat shock protein 70 family. In terms of assembly, part of a large chaperone multiprotein complex comprising DNAJB11, HSP90B1, HSPA5, HYOU, PDIA2, PDIA4, PDIA6, PPIB, SDF2L1, UGGT1 and very small amounts of ERP29, but not, or at very low levels, CALR nor CANX. In terms of tissue distribution, selectively expressed by cultured astrocytes but not endothelial cells, microglia or neurons.

The protein localises to the endoplasmic reticulum lumen. Has a pivotal role in cytoprotective cellular mechanisms triggered by oxygen deprivation. Promotes HSPA5/BiP-mediated ATP nucleotide exchange and thereby activates the unfolded protein response (UPR) pathway in the presence of endoplasmic reticulum stress. May play a role as a molecular chaperone and participate in protein folding. The polypeptide is Hypoxia up-regulated protein 1 (Hyou1) (Rattus norvegicus (Rat)).